The following is a 207-amino-acid chain: Guanylate kinase (207 aa).

Residues 10–187 (GFFIVLSAAS…AVERLQVIYQ (178 aa)) enclose the Guanylate kinase-like domain. 17 to 24 (AASGTGKT) is a binding site for ATP.

It belongs to the guanylate kinase family.

Its subcellular location is the cytoplasm. The catalysed reaction is GMP + ATP = GDP + ADP. Functionally, essential for recycling GMP and indirectly, cGMP. The protein is Guanylate kinase of Syntrophus aciditrophicus (strain SB).